A 485-amino-acid chain; its full sequence is Polyol:NADP oxidoreductase (485 aa).

It belongs to the mannitol dehydrogenase family.

It is found in the cytoplasm. This chain is Polyol:NADP oxidoreductase (por), found in Gluconobacter oxydans (strain 621H) (Gluconobacter suboxydans).